The chain runs to 499 residues: Nuclear receptor-binding protein 2 (499 aa).

Residues 1-31 (MAAPEPAPRRGREREREDESEDESDILEESP) form a disordered region. Basic and acidic residues predominate over residues 7-17 (APRRGRERERE). Residues 18–28 (DESEDESDILE) are compositionally biased toward acidic residues. The Protein kinase domain occupies 36-304 (QKRREQVNQG…AHNLLFHRVL (269 aa)). The segment at 396-416 (APPPEEAQKAKTPTPEPFDSE) is disordered. 2 positions are modified to phosphothreonine: Thr407 and Thr409.

It belongs to the protein kinase superfamily. Ser/Thr protein kinase family. In terms of tissue distribution, expressed in Purkinje cells of the cerebellum and neurons in the CA3 region of the hippocampus. Also detected in non-neural tissues including mesenchymal layer adjacent to epithelium in developing bronchi of the lung, the epithelium of the stomach as well as cells in the liver.

It localises to the cytoplasm. In terms of biological role, may regulate apoptosis of neural progenitor cells during their differentiation. The sequence is that of Nuclear receptor-binding protein 2 from Mus musculus (Mouse).